The primary structure comprises 878 residues: Probable glucan endo-1,3-beta-glucosidase ARB_02077 (878 aa).

A signal peptide spans 1-27; it reads MARGLVSSLLLGQLLLVLVGLFSPAGA. Asparagine 228, asparagine 257, asparagine 290, and asparagine 297 each carry an N-linked (GlcNAc...) asparagine glycan. The tract at residues 373-472 is disordered; sequence AGSGSKAKRL…TACPSAPVTK (100 aa). The segment covering 400-416 has biased composition (pro residues); it reads APAPQPPAQSTAPPYPI. Positions 433–452 are enriched in low complexity; that stretch reads VPTRVPTGGVPSGTTGTAPS. 4 N-linked (GlcNAc...) asparagine glycosylation sites follow: asparagine 505, asparagine 659, asparagine 795, and asparagine 862.

The protein belongs to the glycosyl hydrolase 55 family.

It localises to the secreted. The enzyme catalyses Hydrolysis of (1-&gt;3)-beta-D-glucosidic linkages in (1-&gt;3)-beta-D-glucans.. Functionally, probable glucan endo-1,3-beta-glucosidase involved in the hydrolysis of fungal cell wall. Classified as a small-oligosaccharide-producing type based its the end products: glucose, laminaribiose or laminaritetraose. The protein is Probable glucan endo-1,3-beta-glucosidase ARB_02077 of Arthroderma benhamiae (strain ATCC MYA-4681 / CBS 112371) (Trichophyton mentagrophytes).